The following is a 301-amino-acid chain: Phosphatidylserine decarboxylase proenzyme (301 aa).

Residues Asp-117, His-173, and Ser-260 each act as charge relay system; for autoendoproteolytic cleavage activity in the active site. Ser-260 functions as the Schiff-base intermediate with substrate; via pyruvic acid; for decarboxylase activity in the catalytic mechanism. A Pyruvic acid (Ser); by autocatalysis modification is found at Ser-260.

It belongs to the phosphatidylserine decarboxylase family. PSD-B subfamily. Prokaryotic type II sub-subfamily. Heterodimer of a large membrane-associated beta subunit and a small pyruvoyl-containing alpha subunit. It depends on pyruvate as a cofactor. Post-translationally, is synthesized initially as an inactive proenzyme. Formation of the active enzyme involves a self-maturation process in which the active site pyruvoyl group is generated from an internal serine residue via an autocatalytic post-translational modification. Two non-identical subunits are generated from the proenzyme in this reaction, and the pyruvate is formed at the N-terminus of the alpha chain, which is derived from the carboxyl end of the proenzyme. The autoendoproteolytic cleavage occurs by a canonical serine protease mechanism, in which the side chain hydroxyl group of the serine supplies its oxygen atom to form the C-terminus of the beta chain, while the remainder of the serine residue undergoes an oxidative deamination to produce ammonia and the pyruvoyl prosthetic group on the alpha chain. During this reaction, the Ser that is part of the protease active site of the proenzyme becomes the pyruvoyl prosthetic group, which constitutes an essential element of the active site of the mature decarboxylase.

It localises to the cell membrane. It carries out the reaction a 1,2-diacyl-sn-glycero-3-phospho-L-serine + H(+) = a 1,2-diacyl-sn-glycero-3-phosphoethanolamine + CO2. It participates in phospholipid metabolism; phosphatidylethanolamine biosynthesis; phosphatidylethanolamine from CDP-diacylglycerol: step 2/2. Catalyzes the formation of phosphatidylethanolamine (PtdEtn) from phosphatidylserine (PtdSer). This chain is Phosphatidylserine decarboxylase proenzyme, found in Chlamydia muridarum (strain MoPn / Nigg).